The sequence spans 328 residues: DNA-directed RNA polymerase subunit alpha (328 aa).

Positions 1–244 (MEKFLKYEIK…EHLNPIVSVN (244 aa)) are alpha N-terminal domain (alpha-NTD). Residues 261–328 (KVKSFAKQIE…VQELGLKFRS (68 aa)) form an alpha C-terminal domain (alpha-CTD) region.

This sequence belongs to the RNA polymerase alpha chain family. As to quaternary structure, homodimer. The RNAP catalytic core consists of 2 alpha, 1 beta, 1 beta' and 1 omega subunit. When a sigma factor is associated with the core the holoenzyme is formed, which can initiate transcription.

It carries out the reaction RNA(n) + a ribonucleoside 5'-triphosphate = RNA(n+1) + diphosphate. In terms of biological role, DNA-dependent RNA polymerase catalyzes the transcription of DNA into RNA using the four ribonucleoside triphosphates as substrates. The protein is DNA-directed RNA polymerase subunit alpha of Mycoplasma genitalium (strain ATCC 33530 / DSM 19775 / NCTC 10195 / G37) (Mycoplasmoides genitalium).